The following is a 249-amino-acid chain: Exosome complex component Rrp41 (249 aa).

This sequence belongs to the RNase PH family. Rrp41 subfamily. Component of the archaeal exosome complex. Forms a hexameric ring-like arrangement composed of 3 Rrp41-Rrp42 heterodimers. The hexameric ring associates with a trimer of Rrp4 and/or Csl4 subunits.

It is found in the cytoplasm. In terms of biological role, catalytic component of the exosome, which is a complex involved in RNA degradation. Has 3'-&gt;5' exoribonuclease activity. Can also synthesize heteromeric RNA-tails. This is Exosome complex component Rrp41 from Thermococcus onnurineus (strain NA1).